Consider the following 395-residue polypeptide: Chalcone synthase (395 aa).

Val-2 carries the N-acetylvaline modification. Val-2 bears the N-acetylalanine mark. Cys-169 is an active-site residue.

It belongs to the thiolase-like superfamily. Chalcone/stilbene synthases family.

The catalysed reaction is (E)-4-coumaroyl-CoA + 3 malonyl-CoA + 3 H(+) = 2',4,4',6'-tetrahydroxychalcone + 3 CO2 + 4 CoA. Its pathway is secondary metabolite biosynthesis; flavonoid biosynthesis. The primary product of this enzyme is 4,2',4',6'-tetrahydroxychalcone (also termed naringenin-chalcone or chalcone) which can under specific conditions spontaneously isomerize into naringenin. This is Chalcone synthase (CHS) from Arabidopsis thaliana (Mouse-ear cress).